A 340-amino-acid polypeptide reads, in one-letter code: Fructoselysine 6-phosphate deglycase (340 aa).

SIS domains lie at 35 to 169 (IVEE…RLAP) and 201 to 331 (LGEL…PDER).

In terms of assembly, homododecamer.

The enzyme catalyses N(6)-(6-phospho-D-fructosyl)-L-lysine + H2O = D-glucose 6-phosphate + L-lysine. Its pathway is carbohydrate metabolism; fructoselysine degradation; D-glucose 6-phosphate and lysine from fructoselysine: step 2/2. Strongly inhibited by ZnCl(2). In terms of biological role, catalyzes the reversible conversion of fructoselysine 6-phosphate to glucose 6-phosphate and lysine. Functions in a fructoselysine degradation pathway that allows E.coli to grow on fructoselysine or psicoselysine. The chain is Fructoselysine 6-phosphate deglycase from Escherichia coli (strain K12).